The sequence spans 506 residues: Cytochrome P450 71B8 (506 aa).

Residues 5-25 traverse the membrane as a helical segment; it reads ILLCFFFLFPLLLTLFKKLLP. Residue C443 coordinates heme.

The protein belongs to the cytochrome P450 family. Heme serves as cofactor.

The protein resides in the membrane. In Arabidopsis thaliana (Mouse-ear cress), this protein is Cytochrome P450 71B8 (CYP71B8).